The sequence spans 560 residues: Nuclear hormone receptor family member nhr-8 (560 aa).

The tract at residues 1 to 21 is disordered; the sequence is MPSSSPSMDESRRSAVPPKEP. Positions 23 to 98 form a DNA-binding region, nuclear receptor; the sequence is GRICTVCSDR…VGMNSEWLND (76 aa). NR C4-type zinc fingers lie at residues 26–46 and 62–86; these read CTVC…CESC and CPFS…LNKC. In terms of domain architecture, NR LBD spans 336 to 560; sequence DEITLLEELH…PLIRELCSFE (225 aa).

It belongs to the nuclear hormone receptor family.

It is found in the nucleus. Orphan nuclear receptor. This Caenorhabditis elegans protein is Nuclear hormone receptor family member nhr-8 (nhr-8).